A 37-amino-acid polypeptide reads, in one-letter code: Large ribosomal subunit protein bL36 (37 aa).

The protein belongs to the bacterial ribosomal protein bL36 family.

In Thioalkalivibrio sulfidiphilus (strain HL-EbGR7), this protein is Large ribosomal subunit protein bL36.